Here is a 396-residue protein sequence, read N- to C-terminus: Protein TOC75-4, chloroplastic (396 aa).

The Chloroplast intermembrane segment spans residues 1-23; that stretch reads MEAVKEAVRKIKSLVIPHADEKD. A beta stranded transmembrane segment spans residues 24–32; it reads NGIVFEIKL. At 33 to 87 the chain is on the cytoplasmic side; it reads NETDQRVEKWGLDPSLDFFEVTGNCNLGRPNSEGSNQSLMGSVTIRNIFNPKLDD. A beta stranded transmembrane segment spans residues 88–96; that stretch reads LLSKIEYVR. Topologically, residues 97–140 are chloroplast intermembrane; that stretch reads FLEAVKKPRNRTFKTSFFNSRKLSPVFTGGPGYEDLVPPMFVGR. Residues 141 to 148 traverse the membrane as a beta stranded segment; that stretch reads DCLKATIT. Residues 149-156 are Cytoplasmic-facing; it reads ENLTRQRE. Residues 157-164 traverse the membrane as a beta stranded segment; sequence LTYGVMFE. Residues 165 to 271 lie on the Chloroplast intermembrane side of the membrane; sequence EIITRDENRR…VEEGSDKPQP (107 aa). The chain crosses the membrane as a beta stranded span at residues 272 to 280; that stretch reads PVLVLHGRY. The Cytoplasmic portion of the chain corresponds to 281 to 292; that stretch reads GGCIGDLPSYDV. A beta stranded membrane pass occupies residues 293–301; it reads FALGGPNSV. At 302–363 the chain is on the chloroplast intermembrane side; sequence RGYSMGELGA…LYRKMGHGSS (62 aa). A beta stranded transmembrane segment spans residues 364–370; sequence YGLGVKL. Residues 371 to 384 are Cytoplasmic-facing; sequence GMVRAEYTVRHNRG. The chain crosses the membrane as a beta stranded span at residues 385–392; that stretch reads TGALFLRF. The Chloroplast intermembrane segment spans residues 393-396; that stretch reads GERY.

Belongs to the TOC75 family. Part of the TOC core complex that includes a protein for the specific recognition of transit peptides surrounded by a ring composed of four proteins forming translocation channels, and four to five GTP-binding proteins providing energy. This core complex can interact with components of the TIC complex to form a larger import complex. Chloroplastic protein precursors also interacts with these complexes. Expressed ubiquitously at low levels.

Its subcellular location is the plastid. It localises to the chloroplast outer membrane. Its function is as follows. Mediates the insertion of proteins targeted to the outer membrane of chloroplasts. Required for the import of protein precursors into chloroplasts. Forms the voltage-dependent preprotein translocation channels (hydrophilic beta barrel) of the TOC complex in the chloroplastic outer membrane. Required for etioplast formation and/or etioplast-chloroplast transition during deetiolation. This Arabidopsis thaliana (Mouse-ear cress) protein is Protein TOC75-4, chloroplastic (TOC75-4).